The primary structure comprises 535 residues: CTP synthase (535 aa).

The segment at 1–268 (MPNKYIVVTG…VSKILSRLKL (268 aa)) is amidoligase domain. Position 14 (Ser-14) interacts with CTP. A UTP-binding site is contributed by Ser-14. Residue 15–20 (SVGKGT) participates in ATP binding. Tyr-55 lines the L-glutamine pocket. Residue Asp-72 participates in ATP binding. 2 residues coordinate Mg(2+): Asp-72 and Glu-142. Residues 149–151 (DIE), 189–194 (KTKPLQ), and Lys-225 each bind CTP. Residues 189–194 (KTKPLQ) and Lys-225 each bind UTP. Val-243 is an ATP binding site. The Glutamine amidotransferase type-1 domain occupies 302-535 (YTKLKDSYIS…LGFIRAVASL (234 aa)). Gly-359 serves as a coordination point for L-glutamine. The active-site Nucleophile; for glutamine hydrolysis is the Cys-386. Residues 387–390 (FGFQ), Glu-410, and Arg-467 each bind L-glutamine. Catalysis depends on residues His-511 and Glu-513.

It belongs to the CTP synthase family. As to quaternary structure, homotetramer in the presence of ATP and UTP. The enzyme dissociates into homodimers in the absence of substrate nucleotides.

The enzyme catalyses UTP + L-glutamine + ATP + H2O = CTP + L-glutamate + ADP + phosphate + 2 H(+). The catalysed reaction is L-glutamine + H2O = L-glutamate + NH4(+). It carries out the reaction UTP + NH4(+) + ATP = CTP + ADP + phosphate + 2 H(+). Its pathway is pyrimidine metabolism; CTP biosynthesis via de novo pathway; CTP from UDP: step 2/2. Its activity is regulated as follows. Allosterically activated by GTP, when glutamine is the substrate; GTP has no effect on the reaction when ammonia is the substrate. The allosteric effector GTP functions by stabilizing the protein conformation that binds the tetrahedral intermediate(s) formed during glutamine hydrolysis. Inhibited by the product CTP, via allosteric rather than competitive inhibition. In terms of biological role, catalyzes the ATP-dependent amination of UTP to CTP with either L-glutamine or ammonia as the source of nitrogen. Regulates intracellular CTP levels through interactions with the four ribonucleotide triphosphates. This is CTP synthase from Saccharolobus solfataricus (strain ATCC 35092 / DSM 1617 / JCM 11322 / P2) (Sulfolobus solfataricus).